Here is a 153-residue protein sequence, read N- to C-terminus: UPF0756 membrane protein NT01CX_1209 (153 aa).

Transmembrane regions (helical) follow at residues 5–25 (IILLILMFLSFISKNKSLGIA), 45–65 (ENHFMNLGMTFLMIWMLIPII), 83–103 (IVCFLCGAIVAVLASKGVGFL), and 113–133 (IILGSIVGVSLLGGVPVGPLI).

This sequence belongs to the UPF0756 family.

Its subcellular location is the cell membrane. The chain is UPF0756 membrane protein NT01CX_1209 from Clostridium novyi (strain NT).